Reading from the N-terminus, the 383-residue chain is WD repeat-containing protein 55 (383 aa).

Over residues 1–11 (MDRTCEERPAE) the composition is skewed to basic and acidic residues. The tract at residues 1-33 (MDRTCEERPAEDGSDEEDPDSMEAPTRIRDTPE) is disordered. Residues 12-21 (DGSDEEDPDS) show a composition bias toward acidic residues. Serine 14 carries the post-translational modification Phosphoserine. 7 WD repeats span residues 36-75 (VLEAPASGLAFHPARDLLAAGDVDGDVFVFSYSCQEGETK), 82-121 (HHLKACRAVAFSEDGQKLITVSKDKAIHVLDVEQGQLERR), 125-163 (AHGAPINSLLLVDENVLATGDDTGGICLWDQRKEGPLMD), 166-205 (QHEEYIADMALDPAKKLLLTASGDGCLGIFNIKRRRFELL), 208-247 (PQSGDLTSVTLMKWGKKVACGSSEGTIYLFNWNGFGATSD), 250-289 (ALRAESIDCMVPVTESLLCTGSTDGVIRAVNILPNRVVGS), and 293-332 (HTGEPVEELALSHCGRFLASSGHDQRLKFWDMAQLRAVVV). Residue serine 354 is modified to Phosphoserine. Positions 363-383 (REEGEDSMAQEEKEETGDDSD) are disordered. The span at 365-383 (EGEDSMAQEEKEETGDDSD) shows a compositional bias: acidic residues. A Phosphothreonine modification is found at threonine 378. At serine 382 the chain carries Phosphoserine.

The protein belongs to the WD repeat WDR55 family.

Its subcellular location is the nucleus. The protein localises to the nucleolus. It is found in the cytoplasm. Nucleolar protein that acts as a modulator of rRNA synthesis. Plays a central role during organogenesis. This Homo sapiens (Human) protein is WD repeat-containing protein 55 (WDR55).